Here is a 334-residue protein sequence, read N- to C-terminus: Methionyl-tRNA formyltransferase (334 aa).

Residue 111-114 (SILP) coordinates (6S)-5,6,7,8-tetrahydrofolate.

This sequence belongs to the Fmt family.

The enzyme catalyses L-methionyl-tRNA(fMet) + (6R)-10-formyltetrahydrofolate = N-formyl-L-methionyl-tRNA(fMet) + (6S)-5,6,7,8-tetrahydrofolate + H(+). In terms of biological role, attaches a formyl group to the free amino group of methionyl-tRNA(fMet). The formyl group appears to play a dual role in the initiator identity of N-formylmethionyl-tRNA by promoting its recognition by IF2 and preventing the misappropriation of this tRNA by the elongation apparatus. The polypeptide is Methionyl-tRNA formyltransferase (Trichormus variabilis (strain ATCC 29413 / PCC 7937) (Anabaena variabilis)).